A 247-amino-acid polypeptide reads, in one-letter code: E3 SUMO-protein ligase NSE2 (247 aa).

The residue at position 1 (methionine 1) is an N-acetylmethionine. Glycyl lysine isopeptide (Lys-Gly) (interchain with G-Cter in SUMO2) cross-links involve residues lysine 90 and lysine 107. Phosphoserine is present on serine 116. Glycyl lysine isopeptide (Lys-Gly) (interchain with G-Cter in SUMO2) cross-links involve residues lysine 125 and lysine 130. The SP-RING-type zinc finger occupies 154–240 (VDEDIIVTQS…LRRAIENHNK (87 aa)). Residues cysteine 185, histidine 187, cysteine 210, and cysteine 215 each coordinate Zn(2+).

The protein belongs to the NSE2 family. In terms of assembly, component of the SMC5-SMC6 complex which consists at least of SMC5, SMC6, NSMCE2, NSMCE1, NSMCE4A or EID3 and NSMCE3. In terms of processing, sumoylated, possibly via autosumoylation.

It localises to the nucleus. The protein localises to the chromosome. It is found in the telomere. Its subcellular location is the PML body. Its pathway is protein modification; protein sumoylation. E3 SUMO-protein ligase component of the SMC5-SMC6 complex, a complex involved in DNA double-strand break repair by homologous recombination. Is not be required for the stability of the complex. The complex may promote sister chromatid homologous recombination by recruiting the SMC1-SMC3 cohesin complex to double-strand breaks. The complex is required for telomere maintenance via recombination in ALT (alternative lengthening of telomeres) cell lines and mediates sumoylation of shelterin complex (telosome) components which is proposed to lead to shelterin complex disassembly in ALT-associated PML bodies (APBs). Acts as an E3 ligase mediating SUMO attachment to various proteins such as SMC6L1 and TSNAX, the shelterin complex subunits TERF1, TERF2, TINF2 and TERF2IP, RAD51AP1, and maybe the cohesin components RAD21 and STAG2. Required for recruitment of telomeres to PML nuclear bodies. SUMO protein-ligase activity is required for the prevention of DNA damage-induced apoptosis by facilitating DNA repair, and for formation of APBs in ALT cell lines. Required for sister chromatid cohesion during prometaphase and mitotic progression. The protein is E3 SUMO-protein ligase NSE2 (NSMCE2) of Homo sapiens (Human).